The sequence spans 511 residues: D-alanine--D-alanyl carrier protein ligase (511 aa).

An ATP-binding site is contributed by threonine 152–serine 153. Aspartate 199 provides a ligand contact to D-alanine. Asparagine 294 to threonine 299 provides a ligand contact to ATP. Valine 303 serves as a coordination point for D-alanine. Residues aspartate 385, tyrosine 397–arginine 400, and lysine 499 contribute to the ATP site. Lysine 499 provides a ligand contact to D-alanine.

This sequence belongs to the ATP-dependent AMP-binding enzyme family. DltA subfamily.

The protein resides in the cytoplasm. It catalyses the reaction holo-[D-alanyl-carrier protein] + D-alanine + ATP = D-alanyl-[D-alanyl-carrier protein] + AMP + diphosphate. The protein operates within cell wall biogenesis; lipoteichoic acid biosynthesis. In terms of biological role, catalyzes the first step in the D-alanylation of lipoteichoic acid (LTA), the activation of D-alanine and its transfer onto the D-alanyl carrier protein (Dcp) DltC. In an ATP-dependent two-step reaction, forms a high energy D-alanyl-AMP intermediate, followed by transfer of the D-alanyl residue as a thiol ester to the phosphopantheinyl prosthetic group of the Dcp. D-alanylation of LTA plays an important role in modulating the properties of the cell wall in Gram-positive bacteria, influencing the net charge of the cell wall. This is D-alanine--D-alanyl carrier protein ligase from Streptococcus agalactiae serotype III (strain NEM316).